Reading from the N-terminus, the 921-residue chain is Collagen alpha-1(IX) chain (921 aa).

An N-terminal signal peptide occupies residues 1–23; that stretch reads MKNFWKISVFFCVCSCLGPWVSA. The tract at residues 24–268 is nonhelical region (NC4); that stretch reads TLKRRARFPA…ITTSQTTDER (245 aa). Disulfide bonds link C44–C242 and C198–C252. The Laminin G-like domain maps to 50 to 244; it reads GQDDLPGFDL…LQWMLIHCDP (195 aa). Positions 213, 215, and 253 each coordinate Zn(2+). Disordered stretches follow at residues 253–759 and 783–921; these read HELP…APTD and RPDT…GPDK. Collagen-like domains lie at 269-325, 326-356, 358-403, 416-472, 473-512, 604-656, 657-711, and 712-755; these read GPPG…PGAD, GLTGPDGSPGSVGPRGQKGEPGVPGSRGFPG, GIPG…GTIG, PPGR…GLRG, ITGIVGDKGEKGARGFDGEPGPQGIPGAAGDQGQRGPPGE, GKPG…LPGP, PGLP…PGEP, and GLRG…PPGR. The interval 269 to 405 is triple-helical region (COL3); sequence GPPGEQGPPG…PGPSGTIGFH (137 aa). 2 stretches are compositionally biased toward pro residues: residues 273-285 and 298-310; these read EQGPPGPPGPPGV and KGPPGPPGPPGDP. Over residues 368 to 383 the composition is skewed to low complexity; sequence TTGLPGELGRVGPIGD. Pro residues predominate over residues 387–398; that stretch reads RGPPGPPGPPGP. The interval 406-417 is nonhelical region (NC3); the sequence is DGDPLCPNSCPP. The interval 418-756 is triple-helical region (COL2); the sequence is GRSGYPGLPG…PGIQGPPGRA (339 aa). Basic and acidic residues predominate over residues 479-489; it reads DKGEKGARGFD. Low complexity-rich tracts occupy residues 594–632 and 639–650; these read PGKPGQLGSSGKPGQQGPPGEVGPRGPRGLPGSRGPVGP and PGKLGSVGSPGL. The interval 757 to 786 is nonhelical region (NC2); it reads PTDQHIKQVCMRVVQEHFVEMAASLKRPDT. Residues 787–901 are triple-helical region (COL1); that stretch reads GASGLPGRPG…PGPPGPPGFC (115 aa). The 58-residue stretch at 790–847 folds into the Collagen-like 9 domain; it reads GLPGRPGPPGPPGPPGENGFPGQMGIRGLPGIKGPPGALGLRGPKGDLGEKGERGPPG. A compositionally biased stretch (pro residues) spans 794 to 804; it reads RPGPPGPPGPP. The span at 833–845 shows a compositional bias: basic and acidic residues; the sequence is PKGDLGEKGERGP. The span at 888 to 900 shows a compositional bias: pro residues; it reads VPGPPGPPGPPGF. Positions 902–921 are nonhelical region (NC1); it reads EPASCTLQSGQRAFSKGPDK.

This sequence belongs to the fibril-associated collagens with interrupted helices (FACIT) family. In terms of assembly, heterotrimer of an alpha 1(IX), an alpha 2(IX) and an alpha 3(IX) chain. Covalently linked to the telopeptides of type II collagen by lysine-derived cross-links. Post-translationally, prolines at the third position of the tripeptide repeating unit (G-X-Y) are hydroxylated in some or all of the chains.

Its subcellular location is the secreted. The protein localises to the extracellular space. It is found in the extracellular matrix. In terms of biological role, structural component of hyaline cartilage and vitreous of the eye. The chain is Collagen alpha-1(IX) chain (Col9a1) from Mus musculus (Mouse).